Consider the following 292-residue polypeptide: uncharacterized protein (292 aa).

The next 5 helical transmembrane spans lie at 57-77 (IISL…LTLI), 101-121 (VYVF…FNFM), 143-163 (LIYA…AVLI), 184-204 (VVIT…NFVL), and 271-291 (IAFL…DRGI).

This sequence belongs to the CbiQ family.

The protein localises to the cell membrane. This is an uncharacterized protein from Methanocaldococcus jannaschii (strain ATCC 43067 / DSM 2661 / JAL-1 / JCM 10045 / NBRC 100440) (Methanococcus jannaschii).